The chain runs to 103 residues: Integration host factor subunit alpha (103 aa).

The protein belongs to the bacterial histone-like protein family. Heterodimer of an alpha and a beta chain.

This protein is one of the two subunits of integration host factor, a specific DNA-binding protein that functions in genetic recombination as well as in transcriptional and translational control. In Aromatoleum aromaticum (strain DSM 19018 / LMG 30748 / EbN1) (Azoarcus sp. (strain EbN1)), this protein is Integration host factor subunit alpha.